A 257-amino-acid polypeptide reads, in one-letter code: Phosphate import ATP-binding protein PstB (257 aa).

One can recognise an ABC transporter domain in the interval 11–252; it reads IQVRDLNFYY…PAKKQTEDYI (242 aa). 43–50 contributes to the ATP binding site; the sequence is GPSGCGKS.

This sequence belongs to the ABC transporter superfamily. Phosphate importer (TC 3.A.1.7) family. As to quaternary structure, the complex is composed of two ATP-binding proteins (PstB), two transmembrane proteins (PstC and PstA) and a solute-binding protein (PstS).

The protein resides in the cell inner membrane. The catalysed reaction is phosphate(out) + ATP + H2O = ADP + 2 phosphate(in) + H(+). Its function is as follows. Part of the ABC transporter complex PstSACB involved in phosphate import. Responsible for energy coupling to the transport system. This is Phosphate import ATP-binding protein PstB from Salmonella paratyphi A (strain ATCC 9150 / SARB42).